Consider the following 757-residue polypeptide: Xaa-Pro dipeptidyl-peptidase (757 aa).

Catalysis depends on charge relay system residues Ser348, Asp468, and His498.

It belongs to the peptidase S15 family. Homodimer.

The protein resides in the cytoplasm. It catalyses the reaction Hydrolyzes Xaa-Pro-|- bonds to release unblocked, N-terminal dipeptides from substrates including Ala-Pro-|-p-nitroanilide and (sequentially) Tyr-Pro-|-Phe-Pro-|-Gly-Pro-|-Ile.. In terms of biological role, removes N-terminal dipeptides sequentially from polypeptides having unsubstituted N-termini provided that the penultimate residue is proline. The protein is Xaa-Pro dipeptidyl-peptidase of Streptococcus pneumoniae (strain ATCC 700669 / Spain 23F-1).